A 274-amino-acid polypeptide reads, in one-letter code: Diaminopimelate epimerase (274 aa).

Substrate is bound by residues N11 and N76. C85 (proton donor) is an active-site residue. Substrate contacts are provided by residues 86–87, N157, N189, and 207–208; these read GN and ER. Catalysis depends on C216, which acts as the Proton acceptor. Residue 217–218 participates in substrate binding; the sequence is GT.

This sequence belongs to the diaminopimelate epimerase family. Homodimer.

Its subcellular location is the cytoplasm. The catalysed reaction is (2S,6S)-2,6-diaminopimelate = meso-2,6-diaminopimelate. It functions in the pathway amino-acid biosynthesis; L-lysine biosynthesis via DAP pathway; DL-2,6-diaminopimelate from LL-2,6-diaminopimelate: step 1/1. Its function is as follows. Catalyzes the stereoinversion of LL-2,6-diaminopimelate (L,L-DAP) to meso-diaminopimelate (meso-DAP), a precursor of L-lysine and an essential component of the bacterial peptidoglycan. This chain is Diaminopimelate epimerase, found in Thermobifida fusca (strain YX).